A 140-amino-acid polypeptide reads, in one-letter code: Nucleoside diphosphate kinase (140 aa).

Residues Lys-11, Phe-59, Arg-87, Thr-93, Arg-104, and Asn-114 each contribute to the ATP site. The active-site Pros-phosphohistidine intermediate is His-117.

It belongs to the NDK family. As to quaternary structure, homotetramer. Mg(2+) serves as cofactor.

The protein resides in the cytoplasm. It catalyses the reaction a 2'-deoxyribonucleoside 5'-diphosphate + ATP = a 2'-deoxyribonucleoside 5'-triphosphate + ADP. The catalysed reaction is a ribonucleoside 5'-diphosphate + ATP = a ribonucleoside 5'-triphosphate + ADP. In terms of biological role, major role in the synthesis of nucleoside triphosphates other than ATP. The ATP gamma phosphate is transferred to the NDP beta phosphate via a ping-pong mechanism, using a phosphorylated active-site intermediate. The sequence is that of Nucleoside diphosphate kinase from Ruegeria sp. (strain TM1040) (Silicibacter sp.).